We begin with the raw amino-acid sequence, 526 residues long: Peptide chain release factor 3 (526 aa).

In terms of domain architecture, tr-type G spans 11-277 (SKRRTFAIIS…SLIKWAPSPL (267 aa)). GTP-binding positions include 20 to 27 (SHPDAGKT), 88 to 92 (DTPGH), and 142 to 145 (NKLD).

This sequence belongs to the TRAFAC class translation factor GTPase superfamily. Classic translation factor GTPase family. PrfC subfamily.

Its subcellular location is the cytoplasm. Its function is as follows. Increases the formation of ribosomal termination complexes and stimulates activities of RF-1 and RF-2. It binds guanine nucleotides and has strong preference for UGA stop codons. It may interact directly with the ribosome. The stimulation of RF-1 and RF-2 is significantly reduced by GTP and GDP, but not by GMP. The sequence is that of Peptide chain release factor 3 from Buchnera aphidicola subsp. Acyrthosiphon pisum (strain Tuc7).